The chain runs to 377 residues: tRNA-specific 2-thiouridylase MnmA (377 aa).

ATP is bound by residues Ala-18–Ser-25 and Met-44. The Nucleophile role is filled by Cys-113. Cys-113 and Cys-210 form a disulfide bridge. Gly-137 is a binding site for ATP. Residues Arg-159 to Gln-161 form an interaction with tRNA region. The active-site Cysteine persulfide intermediate is Cys-210.

Belongs to the MnmA/TRMU family.

The protein resides in the cytoplasm. The enzyme catalyses S-sulfanyl-L-cysteinyl-[protein] + uridine(34) in tRNA + AH2 + ATP = 2-thiouridine(34) in tRNA + L-cysteinyl-[protein] + A + AMP + diphosphate + H(+). Its function is as follows. Catalyzes the 2-thiolation of uridine at the wobble position (U34) of tRNA, leading to the formation of s(2)U34. This Rhodospirillum rubrum (strain ATCC 11170 / ATH 1.1.1 / DSM 467 / LMG 4362 / NCIMB 8255 / S1) protein is tRNA-specific 2-thiouridylase MnmA.